The primary structure comprises 311 residues: Glycine-betaine-binding protein (311 aa).

The signal sequence occupies residues 1–23 (MNRLIRSLCLACAGLFAAGLAQA).

Belongs to the OsmX family.

It localises to the periplasm. Functionally, binds glycine-betaine. The chain is Glycine-betaine-binding protein from Pseudomonas aeruginosa (strain ATCC 15692 / DSM 22644 / CIP 104116 / JCM 14847 / LMG 12228 / 1C / PRS 101 / PAO1).